Here is a 194-residue protein sequence, read N- to C-terminus: MKIWTSEHVFDHPWETVTTAAMQKYPNPMNPSVVGVDVLDRHIDPSGKLHSHRLLSTEWGLPSIVKSLIGAARTKTYVQEHSVVDPVEKTMELKSTNISFTNMVSVDERLIYKPHPQDPEKTVLTQEAIITVKGVSLSSYLEGLMASTISSNASKGREAMEWVIHKLNAEIEELTASARGTIRTPMAAAAFAEK.

The PRELI/MSF1 domain occupies 1-172; sequence MKIWTSEHVF…VIHKLNAEIE (172 aa). A phosphoserine mark is found at serine 46 and serine 51.

The protein belongs to the slowmo family.

In Homo sapiens (Human), this protein is PRELI domain containing protein 3B (PRELID3B).